The chain runs to 600 residues: Myelin expression factor 2 (600 aa).

Residues 1-101 (MADANKAEVP…GEKKGPNRNR (101 aa)) form a disordered region. Thr-13 carries the phosphothreonine modification. Ser-17 carries the post-translational modification Phosphoserine. The span at 27 to 42 (GEPRREPHPAEAEKQQ) shows a compositional bias: basic and acidic residues. A Glycyl lysine isopeptide (Lys-Gly) (interchain with G-Cter in SUMO2) cross-link involves residue Lys-53. Basic and acidic residues-rich tracts occupy residues 54–72 (MEND…EKST) and 83–96 (YSKD…EKKG). RRM domains are found at residues 100-178 (NRVF…EDPD) and 233-310 (STIF…MDDK). Residue Arg-406 is modified to Omega-N-methylarginine. A Phosphoserine modification is found at Ser-431. In terms of domain architecture, RRM 3 spans 523-599 (NQIFVRNLPF…REIDVRLDRN (77 aa)).

Monomer.

Its subcellular location is the nucleus. Functionally, transcriptional repressor of the myelin basic protein gene (MBP). Binds to the proximal MB1 element 5'-TTGTCC-3' of the MBP promoter. Its binding to MB1 and function are inhibited by PURA. In Homo sapiens (Human), this protein is Myelin expression factor 2 (MYEF2).